A 232-amino-acid chain; its full sequence is Imidazole glycerol phosphate synthase subunit HisF (232 aa).

Active-site residues include aspartate 11 and aspartate 130.

This sequence belongs to the HisA/HisF family. In terms of assembly, heterodimer of HisH and HisF.

Its subcellular location is the cytoplasm. The enzyme catalyses 5-[(5-phospho-1-deoxy-D-ribulos-1-ylimino)methylamino]-1-(5-phospho-beta-D-ribosyl)imidazole-4-carboxamide + L-glutamine = D-erythro-1-(imidazol-4-yl)glycerol 3-phosphate + 5-amino-1-(5-phospho-beta-D-ribosyl)imidazole-4-carboxamide + L-glutamate + H(+). It participates in amino-acid biosynthesis; L-histidine biosynthesis; L-histidine from 5-phospho-alpha-D-ribose 1-diphosphate: step 5/9. IGPS catalyzes the conversion of PRFAR and glutamine to IGP, AICAR and glutamate. The HisF subunit catalyzes the cyclization activity that produces IGP and AICAR from PRFAR using the ammonia provided by the HisH subunit. The sequence is that of Imidazole glycerol phosphate synthase subunit HisF from Listeria monocytogenes serotype 4a (strain HCC23).